Consider the following 83-residue polypeptide: MKTLLLTLVVVTIVCLDLGHTLLCHNQQSSTSPTTTCCSGGESKCYKKRWPTHRGTITERGCGCPTVKKGIELHCCTTDQCNL.

An N-terminal signal peptide occupies residues 1–21 (MKTLLLTLVVVTIVCLDLGHT). 4 cysteine pairs are disulfide-bonded: cysteine 24–cysteine 45, cysteine 38–cysteine 62, cysteine 64–cysteine 75, and cysteine 76–cysteine 81.

It belongs to the three-finger toxin family. Short-chain subfamily. Type I alpha-neurotoxin sub-subfamily. In terms of tissue distribution, expressed by the venom gland.

The protein resides in the secreted. Functionally, binds to muscle nicotinic acetylcholine receptor (nAChR) and inhibit acetylcholine from binding to the receptor, thereby impairing neuromuscular transmission. The protein is Three-finger toxin W-IV of Walterinnesia aegyptia (Desert black snake).